We begin with the raw amino-acid sequence, 606 residues long: MRVFPTYIAVSGLFGGAFAAFGATNIKGQTKLFGTSFGILAKNASYDYVIVGGGTAGLTVAARLAAQPNVSVAVIEAGSFYEIDNGNISQVPGYGANYLSFNDLTPSPVLVDWGLITEPQDGLNNRQIHYSAGKTLGGSSALNDMIFHRATKGSYQRWAELVDDDTYTWDKLLPYLKKSVDFTKPKDAATYPYDASVYSPEGGPLQVSFPNYRAPCDDFMETAFTKSGLKPIKGLNSGHLDGFAPTTFVINPADQTRSSSEAAFLQEALDTTAMTLYLRTLAKKILFDTNKTANGVLVETNGAEYTISAKKEVILSAGVFHSPQLLLLSGIGQADSLEKFGIPVISDLAGVGQNLWDHLFIFTSHEMNITTNSGVLVDPELLAEAVESYLNQQTGPLTGIGGGVVGWEKLPNRVSFSNSTNETLASFPDDFPEVEYVALAPGSNPASDPLANHFASVTAAVQSTSSRGYVKLRSADPHDAPIININALSHPADADLAVGAIKRLRQIAEATGVRVKEVLPGPEVVSDAEILEWVRNNAVNGYHASSTCAMGNSSNPDAVVDTRAKVYGVSNLRVVDASALPYLPPGHPMSSIYAFAELIAEDILSK.

A signal peptide spans 1–19 (MRVFPTYIAVSGLFGGAFA). N-linked (GlcNAc...) asparagine glycosylation is found at N43, N69, N87, N290, N368, N418, N421, and N552.

The protein belongs to the GMC oxidoreductase family.

The catalysed reaction is terremutin + A = terreate + AH2. Its pathway is secondary metabolite biosynthesis. In terms of biological role, glucose methanol choline oxidoreductase; part of the gene cluster that mediates the biosynthesis of terreic acid, a quinone epoxide inhibitor of Bruton's tyrosine kinase. The first step of the pathway is the synthesis of 6-methylsalicylic acid (6-MSA) by the 6-methylsalicylic acid synthase atX. In the biosynthesis of 6-MSA, atX utilizes one acetyl-CoA and three malonyl-CoAs as its substrates and catalyzes a series of programmed reactions including Claisen condensation, reduction, aldol cyclization, and the hydrolytic cleavage that yields 6-MSA. The 6-methylsalicylate 1-monooxygenase atA then catalyzes the decarboxylative hydroxylation of 6-MSA to 3-methylcatechol. The next step is the conversion of 3-methylcatechol to 3-methyl-1,2,4-benzenetriol by cytochrome P450 monooxygenase atE, which is enhanced by cytochrome P450 monooxygenase atG. Then, the epoxidase atD catalyzes the epoxidation and hydroxyl oxidation of 3-methyl-1,2,4-benzenetriol to terremutin. Lastly, GMC oxidoreductase atC oxidizes terremutin to terreic acid. This Aspergillus terreus (strain NIH 2624 / FGSC A1156) protein is Glucose methanol choline oxidoreductase atC.